Reading from the N-terminus, the 104-residue chain is N(4)-acetylcytidine amidohydrolase (104 aa).

The 89-residue stretch at 7–95 (MTFFERFETD…IQDIYPGISQ (89 aa)) folds into the ASCH domain. Lys-22 functions as the Proton acceptor in the catalytic mechanism. Residue Thr-25 is the Nucleophile of the active site. Catalysis depends on Glu-75, which acts as the Proton donor.

It belongs to the N(4)-acetylcytidine amidohydrolase family.

The enzyme catalyses N(4)-acetylcytidine + H2O = cytidine + acetate + H(+). It catalyses the reaction N(4)-acetyl-2'-deoxycytidine + H2O = 2'-deoxycytidine + acetate + H(+). It carries out the reaction N(4)-acetylcytosine + H2O = cytosine + acetate + H(+). Its function is as follows. Catalyzes the hydrolysis of N(4)-acetylcytidine (ac4C). The chain is N(4)-acetylcytidine amidohydrolase from Vibrio atlanticus (strain LGP32) (Vibrio splendidus (strain Mel32)).